The sequence spans 1222 residues: MLAPRNTETGVPMSQTEADLALRPSPALTSTGPTRLGPPPRRVRRFSGKAEPRPRSSRPSRRSSVDLGLLSSWSQPASLLPEPPDPPDSAGPTRSPPSSSKEPPEGTWMGAAPVKAVDSACPELTGSSGGPGSREPPRVPDAAARERRREQEEKEDTETQAVATSPDGRYLKFDIEIGRGSFKTVYRGLDTDTTVEVAWCELQTRKLSRAERQRFSEEVEMLKGLQHPNIVRFYDSWKSVLRGQVCIVLVTELMTSGTLKTYLRRFREMKPRVLQRWSRQILRGLHFLHSRVPPILHRDLKCDNVFITGPSGSVKIGDLGLATLKRASFAKSVIGTPEFMAPEMYEEKYDEAVDVYAFGMCMLEMATSEYPYSECQNAAQIYRKVTSGTKPNSFYKVKMPEVKEIIEGCIRTDKNERFTIQDLLAHAFFREERGVHVELAEEDDGEKPGLKLWLRMEDARRGGRPRDNQAIEFLFQLGRDAAEEVAQEMVALGLVCEADYQPVARAVRERVAAIQRKREKLRKARELEVLPPDSGPPPATVSLAPGPPSAFPPEPEEPEADQHQSFLFRHASYSSTTSDCETDGYLSSSGFLDASDPALQPPGGLPSSPAESHLCLPSGFALSIPRSGPGSDFSPGDSYASDAASGLSDMGEGGQMRKNPVKTLRRRPRSRLRVTSVSDQSDRVVECQLQTHNSKMVTFRFDLDGDSPEEIAAAMVYNEFILPSERDGFLSRIREIIQRVETLLKRDAGPPEAAEDALSPQEEPAALPALPGPPNAEPQRSISPEQRSWAAFSTSPSSPGTPLSPGAPFSPGTPPVFPCPIFPITSPSCYPCPFSQVSSNPYPQAPSSLLPLSSSASQVPLPSSSLPISAPLPFSPSYPQDPLSPTSLPVCPSPPSLPSTTAAPLLSLASAFSLAVMTVAQSLLSPSPGLLSQSPPAPPGPLPSLPLSLASCDQESLSAQTAETENEASRNPAQPLLGDARLAPISEEGKPQLVGRFQVTSSKEPAEPPLQPASPTLSRSLKLPSPPLTSESSDTEDSAAGGPETREALAESDRAAEGLGVAVDDEKDEGKEPLLGGSSPILSHPSPVWMNYSYSSLCLSSEESESSGEDEEFWAELQNLRQKHLSEVEALQTLQKKEIEDLYSRLGKQPPPGIVAPAAMLSCRQRRLSKGSFPTSRRNSLQRSDLPGPGIMRRNSLSGSSTGSQEQRASKGVTFAGDIGRM.

Residues methionine 1 to glutamate 17 are compositionally biased toward polar residues. A disordered region spans residues methionine 1–serine 165. Residues alanine 90 to lysine 101 show a composition bias toward low complexity. Serine 95 carries the phosphoserine modification. The span at glutamate 135–glutamate 152 shows a compositional bias: basic and acidic residues. Residues lysine 154 and lysine 172 each participate in a glycyl lysine isopeptide (Lys-Gly) (interchain with G-Cter in ubiquitin) cross-link. A Protein kinase domain is found at leucine 171–phenylalanine 429. Serine 181 is a binding site for ATP. Glycyl lysine isopeptide (Lys-Gly) (interchain with G-Cter in ubiquitin) cross-links involve residues lysine 183, lysine 223, and lysine 238. Residues threonine 251 to methionine 254 and lysine 301 contribute to the ATP site. The Proton acceptor role is filled by aspartate 318. A Glycyl lysine isopeptide (Lys-Gly) (interchain with G-Cter in ubiquitin) cross-link involves residue lysine 325. Phosphoserine; by autocatalysis occurs at positions 328 and 332. Glycyl lysine isopeptide (Lys-Gly) (interchain with G-Cter in ubiquitin) cross-links involve residues lysine 384, lysine 390, lysine 447, and lysine 451. The tract at residues arginine 525–glutamine 562 is disordered. Over residues aspartate 533–proline 553 the composition is skewed to pro residues. Residues glutamate 554–glutamine 564 are interaction with KLHL3. A Phosphoserine modification is found at serine 572. Disordered regions lie at residues arginine 626–asparagine 659, aspartate 747–phenylalanine 809, serine 877–serine 896, and serine 927–leucine 976. Composition is skewed to low complexity over residues serine 627–serine 638, alanine 757–alanine 769, serine 793–alanine 807, and serine 877–valine 890. Positions proline 935–serine 944 are enriched in pro residues. The segment covering aspartate 953–glutamate 963 has biased composition (polar residues). Residue lysine 990 forms a Glycyl lysine isopeptide (Lys-Gly) (interchain with G-Cter in ubiquitin) linkage. The RFXV motif motif lies at arginine 996–valine 999. Residues threonine 1000–proline 1087 are disordered. Phosphoserine is present on serine 1014. Residues serine 1014–serine 1032 are compositionally biased toward low complexity. Residues glutamate 1044–alanine 1056 are compositionally biased toward basic and acidic residues. Glycyl lysine isopeptide (Lys-Gly) (interchain with G-Cter in ubiquitin) cross-links involve residues lysine 1123, lysine 1136, and lysine 1137. The interval arginine 1166 to methionine 1222 is disordered. Polar residues-rich tracts occupy residues serine 1172–arginine 1183 and asparagine 1195–glutamine 1207. Phosphoserine is present on serine 1196.

Belongs to the protein kinase superfamily. Ser/Thr protein kinase family. WNK subfamily. In terms of assembly, interacts with the C-terminal region of KCNJ1. Interacts with WNK1 and WNK3. Interacts with KLHL3. Mg(2+) is required as a cofactor. In terms of processing, autophosphorylated at Ser-328 and Ser-332, promoting its activation. Phosphorylated by WNK1 and WNK3. Phosphorylated at Ser-572 in a MAP3K15/ASK3-dependent process in response to osmotic stress or hypotonic low-chloride stimulation. Post-translationally, ubiquitinated by the BCR(KLHL3) complex, leading to its degradation. Also ubiquitinated by the BCR(KLHL2) complex. Locates to the distal convoluted tubule, the medullary collecting duct and the cortical collecting duct of the kidney. Expressed in pancreatic duct.

Its subcellular location is the cell junction. It localises to the tight junction. The enzyme catalyses L-seryl-[protein] + ATP = O-phospho-L-seryl-[protein] + ADP + H(+). It catalyses the reaction L-threonyl-[protein] + ATP = O-phospho-L-threonyl-[protein] + ADP + H(+). With respect to regulation, activation requires autophosphorylation of Ser-328 and Ser-332. Autophosphorylation and subsequent activation is inhibited by increases in intracellular ionic strength: Cl(-) potently inhibits WNK4 kinase activity via direct binding. Also inhibited by K(+) ions. In terms of biological role, serine/threonine-protein kinase component of the WNK4-SPAK/OSR1 kinase cascade, which acts as a key regulator of ion transport in the distal nephron and blood pressure. The WNK4-SPAK/OSR1 kinase cascade is composed of WNK4, which mediates phosphorylation and activation of downstream kinases OXSR1/OSR1 and STK39/SPAK. Following activation, OXSR1/OSR1 and STK39/SPAK catalyze phosphorylation of ion cotransporters, such as SLC12A1/NKCC2, SLC12A2/NKCC1, SLC12A3/NCC, SLC12A5/KCC2 or SLC12A6/KCC3, regulating their activity. Acts as a molecular switch that regulates the balance between renal salt reabsorption and K(+) secretion by modulating the activities of renal transporters and channels, including the Na-Cl cotransporter SLC12A3/NCC and the K(+) channel, KCNJ1/ROMK. Regulates NaCl reabsorption in the distal nephron by activating the thiazide-sensitive Na-Cl cotransporter SLC12A3/NCC in distal convoluted tubule cells of kidney: activates SLC12A3/NCC in a OXSR1/OSR1- and STK39/SPAK-dependent process. Also acts as a scaffold protein independently of its protein kinase activity: negatively regulates cell membrane localization of various transporters and channels (CFTR, KCNJ1/ROMK, SLC4A4, SLC26A9 and TRPV4) by clathrin-dependent endocytosis. Also inhibits the activity of the epithelial Na(+) channel (ENaC) SCNN1A, SCNN1B, SCNN1D in a inase-independent mechanism. May also phosphorylate NEDD4L. This is Serine/threonine-protein kinase WNK4 from Mus musculus (Mouse).